The following is an 87-amino-acid chain: Mu-conotoxin cal12b (87 aa).

The signal sequence occupies residues 1-19 (MKLTCVLVVLLLLLPYGDL). A propeptide spanning residues 20–42 (ITNNYIRGAARKVTPWRRNLKTR) is cleaved from the precursor. Disulfide bonds link C45–C58, C53–C70, C60–C75, and C69–C81. 6'-bromotryptophan is present on W59. P65 carries the 4-hydroxyproline modification. W79 and W80 each carry 6'-bromotryptophan. P82 is modified (4-hydroxyproline). W86 bears the 6'-bromotryptophan mark.

Expressed by the venom duct.

The protein localises to the secreted. Functionally, mu-conotoxins block voltage-gated sodium channels. This toxin reversibly blocks voltage-gated sodium channel in cephalopods (tested on squid giant-fiber-lobe neurons) with an inhibitor constant (Ki) of 15 nmol/l, with no alteration in the voltage dependence of sodium conductance or on the kinetics of inactivation. Has no effect on sodium channels of the two gastropod S.luhuanus and A.californica (which are not natural prey). This is Mu-conotoxin cal12b from Californiconus californicus (California cone).